The sequence spans 401 residues: Exodeoxyribonuclease 7 large subunit (401 aa).

Belongs to the XseA family. Heterooligomer composed of large and small subunits.

Its subcellular location is the cytoplasm. The catalysed reaction is Exonucleolytic cleavage in either 5'- to 3'- or 3'- to 5'-direction to yield nucleoside 5'-phosphates.. Functionally, bidirectionally degrades single-stranded DNA into large acid-insoluble oligonucleotides, which are then degraded further into small acid-soluble oligonucleotides. In Clostridioides difficile (strain 630) (Peptoclostridium difficile), this protein is Exodeoxyribonuclease 7 large subunit.